Reading from the N-terminus, the 654-residue chain is tRNA 5-methylaminomethyl-2-thiouridine biosynthesis bifunctional protein MnmC (654 aa).

The tract at residues 1–236 (MTDRIVPATL…KRAMLVGEFA (236 aa)) is tRNA (mnm(5)s(2)U34)-methyltransferase. Residues 260 to 654 (IGAGLAGCAA…IRALRRGRVA (395 aa)) form an FAD-dependent cmnm(5)s(2)U34 oxidoreductase region.

The protein in the N-terminal section; belongs to the methyltransferase superfamily. tRNA (mnm(5)s(2)U34)-methyltransferase family. It in the C-terminal section; belongs to the DAO family. FAD is required as a cofactor.

The protein resides in the cytoplasm. The enzyme catalyses 5-aminomethyl-2-thiouridine(34) in tRNA + S-adenosyl-L-methionine = 5-methylaminomethyl-2-thiouridine(34) in tRNA + S-adenosyl-L-homocysteine + H(+). Catalyzes the last two steps in the biosynthesis of 5-methylaminomethyl-2-thiouridine (mnm(5)s(2)U) at the wobble position (U34) in tRNA. Catalyzes the FAD-dependent demodification of cmnm(5)s(2)U34 to nm(5)s(2)U34, followed by the transfer of a methyl group from S-adenosyl-L-methionine to nm(5)s(2)U34, to form mnm(5)s(2)U34. This is tRNA 5-methylaminomethyl-2-thiouridine biosynthesis bifunctional protein MnmC from Burkholderia thailandensis (strain ATCC 700388 / DSM 13276 / CCUG 48851 / CIP 106301 / E264).